Consider the following 213-residue polypeptide: CDP-diacylglycerol--inositol 3-phosphatidyltransferase (213 aa).

Over 1–5 (MPEEN) the chain is Cytoplasmic. The chain crosses the membrane as a helical span at residues 6 to 26 (IFLFVPNLIGYARIVFAIISF). Tyrosine 27 is a topological domain (lumenal). The helical transmembrane segment at 28 to 48 (FMPCCPFTASSFYLLSGLLDA) threads the bilayer. Residues aspartate 47 and aspartate 50 each contribute to the Mg(2+) site. Residues 49–73 (FDGHAARALNQGTRFGAMLDMLTDR) lie on the Cytoplasmic side of the membrane. Glycine 51, arginine 55, and threonine 61 together coordinate a CDP-1,2-diacyl-sn-glycerol. The Mg(2+) site is built by aspartate 68 and aspartate 72. Aspartate 72 serves as the catalytic Proton acceptor. The helical transmembrane segment at 74–94 (CATMCLLVNLALLYPRATLLF) threads the bilayer. Residue glutamine 95 is a topological domain, lumenal. Residues 96-116 (LSMSLDVASHWLHLHSSVVRG) traverse the membrane as a helical segment. Over 117 to 139 (SESHKMIDLSGNPVLRIYYTSRP) the chain is Cytoplasmic. The chain crosses the membrane as a helical span at residues 140 to 160 (ALFTLCAGNELFYCLLYLFNF). Residues 161–174 (SEGPLVGSVGLFRM) lie on the Lumenal side of the membrane. The helical transmembrane segment at 175–195 (GLWITAPIALLKSIISVIHLV) threads the bilayer. The Cytoplasmic segment spans residues 196–213 (TAARNMAALDAADRAKKK).

The protein belongs to the CDP-alcohol phosphatidyltransferase class-I family. The cofactor is Mn(2+). Mg(2+) serves as cofactor. As to expression, detected in liver (at protein level). Widely expressed. Highly expressed in the brain and kidney; lower levels in heart, spleen, lung, liver, skeletal muscle and testis.

It localises to the endoplasmic reticulum membrane. The protein localises to the cell membrane. It carries out the reaction a CDP-1,2-diacyl-sn-glycerol + myo-inositol = a 1,2-diacyl-sn-glycero-3-phospho-(1D-myo-inositol) + CMP + H(+). Functionally, catalyzes the biosynthesis of phosphatidylinositol (PtdIns) as well as PtdIns:inositol exchange reaction. May thus act to reduce an excessive cellular PtdIns content. The exchange activity is due to the reverse reaction of PtdIns synthase and is dependent on CMP, which is tightly bound to the enzyme. This chain is CDP-diacylglycerol--inositol 3-phosphatidyltransferase, found in Rattus norvegicus (Rat).